Consider the following 92-residue polypeptide: Plasmid copy control protein CopR (92 aa).

Basic and acidic residues predominate over residues 1 to 27 (MELAFRESLKKMRGTKSKEKFSQELEM). Disordered regions lie at residues 1–40 (MELAFRESLKKMRGTKSKEKFSQELEMSRSNYSRIESGKS) and 63–92 (IPNEPTEPEPETEQVTLELEMEEEKSNDFV). An HTH cro/C1-type domain is found at 9–62 (LKKMRGTKSKEKFSQELEMSRSNYSRIESGKSDPTIKTLEQIVKLTNSTLVVDL). The H-T-H motif DNA-binding region spans 20–39 (KFSQELEMSRSNYSRIESGK).

Involved in copy control of plasmid pIP501. The sequence is that of Plasmid copy control protein CopR (copR) from Streptococcus agalactiae.